The sequence spans 290 residues: Short-chain dehydrogenase srdE (290 aa).

The NADP(+) site is built by I11, T37, D58, and N86. The helical transmembrane segment at 125–145 threads the bilayer; it reads LIASSGIIVNIGSIGGVVPFV. Y150 contacts NADP(+). The active-site Proton donor is Y150. N-linked (GlcNAc...) asparagine glycosylation occurs at N151. NADP(+) is bound by residues K154, V183, and T185. K154 (lowers pKa of active site Tyr) is an active-site residue.

The protein belongs to the short-chain dehydrogenases/reductases (SDR) family.

Its subcellular location is the membrane. Short-chain dehydrogenase; part of the gene cluster that mediates the biosynthesis of sordarial, a salicylic aldehyde structurally related to the phytotoxin pyriculol. The most interesting aspect of this pathway is formation of an aromatic product from the highly reducing polyketide synthase srdA. SrdA synthesizes a reduced polyketide chain from one molecule of acetyl-CoA and five molecules of malonyl-CoA. The polyketide chain is then reductively released as an aldehyde. The oxidoreductases srdC, srdD and srdE then oxidize one of the hydroxy groups to facilitate the intramolecular aldol condensation, followed by dehydration to yield a salicylic aldehyde. This aldehyde can undergo facile reduction by endogenous reductases to yield the alcohol 1-hydroxy-2-hydroxymethyl-3-pent-1,3-dienylbenzene. The flavin-dependent srdI counteract against the propensity of the aldehydes to be reduced under physiological conditions and is responsible for reoxidizing 1-hydroxy-2-hydroxymethyl-3-pent-1,3-dienylbenzene back to the salicylic aldehyde. This salicylic aldehyde is then selectively epoxidized by the cupin-domain-containing oxidoreductase srdB to yield the epoxide, which can be hydrolyzed stereoselectively by the hydrolase srdG to give the final product sordarial. This is Short-chain dehydrogenase srdE from Neurospora crassa (strain ATCC 24698 / 74-OR23-1A / CBS 708.71 / DSM 1257 / FGSC 987).